Here is a 274-residue protein sequence, read N- to C-terminus: MRGSGRASSAITIVNAFATGKGAAIGIELWTEARVRVTGDGEVRGKIVVKGEEFKDYRLVNSVISVLREVTGEPFGVRFEIHSDIPVGKGLKSSSAAANSLTKALVEALRLNIDDLSIVKLGVEAAKRAGVTITGAFDDACASYFGGLCITDNYEMEILVKREINPETVVLLIPRETVLTESLKGVDFSKISPFIGEALRLAISGEWKKALVINGLLYSTFLGYDLAPMREALKLGAFVGLCGKGPAFFAIADEPEEIIEAWSSFGDVIATSLR.

Position 86–96 (86–96 (PVGKGLKSSSA)) interacts with ATP.

This sequence belongs to the GHMP kinase family. Archaeal shikimate kinase subfamily.

Its subcellular location is the cytoplasm. It carries out the reaction shikimate + ATP = 3-phosphoshikimate + ADP + H(+). It functions in the pathway metabolic intermediate biosynthesis; chorismate biosynthesis; chorismate from D-erythrose 4-phosphate and phosphoenolpyruvate: step 5/7. This chain is Shikimate kinase (aroK), found in Pyrococcus abyssi (strain GE5 / Orsay).